The sequence spans 77 residues: Acyl carrier protein (77 aa).

Residues 1–76 (MAVFDDVRDV…DVVNYIEKLG (76 aa)) form the Carrier domain. O-(pantetheine 4'-phosphoryl)serine is present on Ser36.

It belongs to the acyl carrier protein (ACP) family. 4'-phosphopantetheine is transferred from CoA to a specific serine of apo-ACP by AcpS. This modification is essential for activity because fatty acids are bound in thioester linkage to the sulfhydryl of the prosthetic group.

The protein localises to the cytoplasm. Its pathway is lipid metabolism; fatty acid biosynthesis. Its function is as follows. Carrier of the growing fatty acid chain in fatty acid biosynthesis. The chain is Acyl carrier protein from Campylobacter curvus (strain 525.92).